The following is a 262-amino-acid chain: Sepiapterin reductase (262 aa).

Methionine 1 carries the post-translational modification N-acetylmethionine. Residues 15–21 (GASRGFG) and 43–44 (RS) each bind NADP(+). Position 46 is a phosphoserine (serine 46). 70–71 (DL) serves as a coordination point for NADP(+). Substrate-binding positions include 158–159 (SL) and tyrosine 171. An NADP(+)-binding site is contributed by lysine 175. A Phosphoserine modification is found at serine 196. Glycine 200 serves as a coordination point for substrate. 202 to 207 (LDTDMQ) contributes to the NADP(+) binding site. Serine 214 is modified (phosphoserine). Aspartate 258 serves as a coordination point for substrate.

This sequence belongs to the sepiapterin reductase family. In terms of assembly, homodimer.

The protein localises to the cytoplasm. It carries out the reaction L-erythro-7,8-dihydrobiopterin + NADP(+) = L-sepiapterin + NADPH + H(+). The enzyme catalyses (6R)-L-erythro-5,6,7,8-tetrahydrobiopterin + 2 NADP(+) = 6-pyruvoyl-5,6,7,8-tetrahydropterin + 2 NADPH + 2 H(+). The catalysed reaction is (S)-benzoin + NADP(+) = benzil + NADPH + H(+). Catalyzes the final one or two reductions in tetra-hydrobiopterin biosynthesis to form 5,6,7,8-tetrahydrobiopterin. The enzyme also catalyzes the reduction of benzil to (S)-benzoin. The chain is Sepiapterin reductase (SPR) from Meriones unguiculatus (Mongolian jird).